A 461-amino-acid chain; its full sequence is Fumarate hydratase class II (461 aa).

Substrate is bound by residues Ser-98–Thr-100, His-129–Asp-132, Ser-139–Asn-141, and Thr-187. His-188 (proton donor/acceptor) is an active-site residue. Ser-318 is an active-site residue. Residues Ser-319 and Lys-324–Asn-326 contribute to the substrate site.

Belongs to the class-II fumarase/aspartase family. Fumarase subfamily. As to quaternary structure, homotetramer.

Its subcellular location is the cytoplasm. The catalysed reaction is (S)-malate = fumarate + H2O. It participates in carbohydrate metabolism; tricarboxylic acid cycle; (S)-malate from fumarate: step 1/1. Its function is as follows. Involved in the TCA cycle. Catalyzes the stereospecific interconversion of fumarate to L-malate. The sequence is that of Fumarate hydratase class II from Rickettsia prowazekii (strain Madrid E).